A 160-amino-acid chain; its full sequence is Large ribosomal subunit protein uL10 (160 aa).

The protein belongs to the universal ribosomal protein uL10 family. In terms of assembly, part of the ribosomal stalk of the 50S ribosomal subunit. The N-terminus interacts with L11 and the large rRNA to form the base of the stalk. The C-terminus forms an elongated spine to which L12 dimers bind in a sequential fashion forming a multimeric L10(L12)X complex.

In terms of biological role, forms part of the ribosomal stalk, playing a central role in the interaction of the ribosome with GTP-bound translation factors. The chain is Large ribosomal subunit protein uL10 from Wolinella succinogenes (strain ATCC 29543 / DSM 1740 / CCUG 13145 / JCM 31913 / LMG 7466 / NCTC 11488 / FDC 602W) (Vibrio succinogenes).